Here is a 160-residue protein sequence, read N- to C-terminus: Protein-export protein SecB (160 aa).

It belongs to the SecB family. Homotetramer, a dimer of dimers. One homotetramer interacts with 1 SecA dimer.

It is found in the cytoplasm. One of the proteins required for the normal export of preproteins out of the cell cytoplasm. It is a molecular chaperone that binds to a subset of precursor proteins, maintaining them in a translocation-competent state. It also specifically binds to its receptor SecA. This is Protein-export protein SecB from Aliivibrio salmonicida (strain LFI1238) (Vibrio salmonicida (strain LFI1238)).